We begin with the raw amino-acid sequence, 482 residues long: Zinc metalloproteinase/disintegrin (482 aa).

Residues 1–20 (MIQVLLVTICLAAFPYQGSS) form the signal peptide. A propeptide spanning residues 21-189 (MILESGNVND…IKASQLVVTA (169 aa)) is cleaved from the precursor. The 197-residue stretch at 197 to 393 (RYIELVVVAD…HNPQCILNEP (197 aa)) folds into the Peptidase M12B domain. Positions 200 and 284 each coordinate Ca(2+). Cystine bridges form between cysteine 308–cysteine 388 and cysteine 348–cysteine 372. Histidine 333 contributes to the Zn(2+) binding site. Glutamate 334 is a catalytic residue. Histidine 337 and histidine 343 together coordinate Zn(2+). Residues cysteine 388 and asparagine 391 each coordinate Ca(2+). Residues 394 to 409 (LRTDTVSTPVSGNELL) constitute a propeptide that is removed on maturation. Residues 401-482 (TPVSGNELLE…AGCPRNPFHA (82 aa)) form the Disintegrin domain. 6 cysteine pairs are disulfide-bonded: cysteine 415/cysteine 430, cysteine 417/cysteine 425, cysteine 424/cysteine 447, cysteine 438/cysteine 444, cysteine 443/cysteine 468, and cysteine 456/cysteine 475. The Cell attachment site motif lies at 460 to 462 (RGD).

It belongs to the venom metalloproteinase (M12B) family. P-II subfamily. P-IId sub-subfamily. Homodimer; disulfide-linked (disintegrin). Requires Zn(2+) as cofactor. As to expression, expressed by the venom gland.

The protein resides in the secreted. This recombinant protein hydrolyzes fibronectin, but has no effect on type I gelatin and type I to V collagens. Selectively hydrolyzes the Aalpha-chain of fibrinogen (FGA), but has no effect on fibrin. Functionally, inhibits ADP-induced platelet aggregation. Its function is as follows. Recombinant metalloproteinase-disintegrin Mt-d-I (393-408): hydrolyzes type I gelatin, type III and V collagens, but has no effect on type I, II, IV collagens and fibronectin. Selectively hydrolyzes the Aalpha-chain of fibrinogen, but has no effect on fibrin. May induce hemorrhage in vascular tissue. Strongly inhibits ADP-induced platelet aggregation. When concentrated, Mt-d-I undergoes autoproteolytic processing into metalloproteinase and disintegrin. This chain is Zinc metalloproteinase/disintegrin, found in Gloydius brevicauda (Korean slamosa snake).